Reading from the N-terminus, the 212-residue chain is Leucyl/phenylalanyl-tRNA--protein transferase (212 aa).

The protein belongs to the L/F-transferase family.

Its subcellular location is the cytoplasm. The enzyme catalyses N-terminal L-lysyl-[protein] + L-leucyl-tRNA(Leu) = N-terminal L-leucyl-L-lysyl-[protein] + tRNA(Leu) + H(+). The catalysed reaction is N-terminal L-arginyl-[protein] + L-leucyl-tRNA(Leu) = N-terminal L-leucyl-L-arginyl-[protein] + tRNA(Leu) + H(+). It carries out the reaction L-phenylalanyl-tRNA(Phe) + an N-terminal L-alpha-aminoacyl-[protein] = an N-terminal L-phenylalanyl-L-alpha-aminoacyl-[protein] + tRNA(Phe). In terms of biological role, functions in the N-end rule pathway of protein degradation where it conjugates Leu, Phe and, less efficiently, Met from aminoacyl-tRNAs to the N-termini of proteins containing an N-terminal arginine or lysine. In Jannaschia sp. (strain CCS1), this protein is Leucyl/phenylalanyl-tRNA--protein transferase.